We begin with the raw amino-acid sequence, 428 residues long: Glutamyl-tRNA reductase (428 aa).

Substrate is bound by residues 55–58 (TCNR), serine 114, 119–121 (ETQ), and glutamine 125. Cysteine 56 functions as the Nucleophile in the catalytic mechanism. 194–199 (GAGEMI) contacts NADP(+).

This sequence belongs to the glutamyl-tRNA reductase family. As to quaternary structure, homodimer.

The catalysed reaction is (S)-4-amino-5-oxopentanoate + tRNA(Glu) + NADP(+) = L-glutamyl-tRNA(Glu) + NADPH + H(+). It functions in the pathway porphyrin-containing compound metabolism; protoporphyrin-IX biosynthesis; 5-aminolevulinate from L-glutamyl-tRNA(Glu): step 1/2. Catalyzes the NADPH-dependent reduction of glutamyl-tRNA(Glu) to glutamate 1-semialdehyde (GSA). This chain is Glutamyl-tRNA reductase, found in Paraburkholderia xenovorans (strain LB400).